The primary structure comprises 149 residues: Ribosome maturation factor RimP (149 aa).

Belongs to the RimP family.

It is found in the cytoplasm. In terms of biological role, required for maturation of 30S ribosomal subunits. In Sulfurimonas denitrificans (strain ATCC 33889 / DSM 1251) (Thiomicrospira denitrificans (strain ATCC 33889 / DSM 1251)), this protein is Ribosome maturation factor RimP.